We begin with the raw amino-acid sequence, 360 residues long: Biotin synthase (360 aa).

The segment at 1 to 21 (MTQLNIAPASTDTAAASNNNA) is disordered. The region spanning 62–289 (NTVQLSTLLS…RAMVRLSAGR (228 aa)) is the Radical SAM core domain. [4Fe-4S] cluster is bound by residues Cys77, Cys81, and Cys84. Positions 121, 152, 212, and 284 each coordinate [2Fe-2S] cluster.

This sequence belongs to the radical SAM superfamily. Biotin synthase family. Homodimer. [4Fe-4S] cluster is required as a cofactor. [2Fe-2S] cluster serves as cofactor.

It carries out the reaction (4R,5S)-dethiobiotin + (sulfur carrier)-SH + 2 reduced [2Fe-2S]-[ferredoxin] + 2 S-adenosyl-L-methionine = (sulfur carrier)-H + biotin + 2 5'-deoxyadenosine + 2 L-methionine + 2 oxidized [2Fe-2S]-[ferredoxin]. Its pathway is cofactor biosynthesis; biotin biosynthesis; biotin from 7,8-diaminononanoate: step 2/2. Its function is as follows. Catalyzes the conversion of dethiobiotin (DTB) to biotin by the insertion of a sulfur atom into dethiobiotin via a radical-based mechanism. The protein is Biotin synthase of Paraburkholderia xenovorans (strain LB400).